The sequence spans 87 residues: Large ribosomal subunit protein bL31B (87 aa).

Belongs to the bacterial ribosomal protein bL31 family. Type B subfamily. As to quaternary structure, part of the 50S ribosomal subunit.

The protein is Large ribosomal subunit protein bL31B of Ralstonia nicotianae (strain ATCC BAA-1114 / GMI1000) (Ralstonia solanacearum).